The primary structure comprises 109 residues: Thiosulfate sulfurtransferase GlpE (109 aa).

In terms of domain architecture, Rhodanese spans R16 to A104. C64 acts as the Cysteine persulfide intermediate in catalysis.

This sequence belongs to the GlpE family.

It is found in the cytoplasm. The enzyme catalyses thiosulfate + hydrogen cyanide = thiocyanate + sulfite + 2 H(+). The catalysed reaction is thiosulfate + [thioredoxin]-dithiol = [thioredoxin]-disulfide + hydrogen sulfide + sulfite + 2 H(+). Its function is as follows. Transferase that catalyzes the transfer of sulfur from thiosulfate to thiophilic acceptors such as cyanide or dithiols. May function in a CysM-independent thiosulfate assimilation pathway by catalyzing the conversion of thiosulfate to sulfite, which can then be used for L-cysteine biosynthesis. This Pseudomonas fluorescens (strain ATCC BAA-477 / NRRL B-23932 / Pf-5) protein is Thiosulfate sulfurtransferase GlpE.